A 425-amino-acid polypeptide reads, in one-letter code: Serine--tRNA ligase (425 aa).

230–232 (TAE) lines the L-serine pocket. 261 to 263 (RSE) contacts ATP. Residue Glu284 participates in L-serine binding. 348 to 351 (EISS) serves as a coordination point for ATP. Residue Ser384 coordinates L-serine.

The protein belongs to the class-II aminoacyl-tRNA synthetase family. Type-1 seryl-tRNA synthetase subfamily. As to quaternary structure, homodimer. The tRNA molecule binds across the dimer.

It is found in the cytoplasm. The enzyme catalyses tRNA(Ser) + L-serine + ATP = L-seryl-tRNA(Ser) + AMP + diphosphate + H(+). It carries out the reaction tRNA(Sec) + L-serine + ATP = L-seryl-tRNA(Sec) + AMP + diphosphate + H(+). Its pathway is aminoacyl-tRNA biosynthesis; selenocysteinyl-tRNA(Sec) biosynthesis; L-seryl-tRNA(Sec) from L-serine and tRNA(Sec): step 1/1. Functionally, catalyzes the attachment of serine to tRNA(Ser). Is also able to aminoacylate tRNA(Sec) with serine, to form the misacylated tRNA L-seryl-tRNA(Sec), which will be further converted into selenocysteinyl-tRNA(Sec). This is Serine--tRNA ligase from Streptococcus pyogenes serotype M28 (strain MGAS6180).